Reading from the N-terminus, the 565-residue chain is Formate--tetrahydrofolate ligase (565 aa).

65 to 72 provides a ligand contact to ATP; that stretch reads TPAGEGKT.

The protein belongs to the formate--tetrahydrofolate ligase family.

The catalysed reaction is (6S)-5,6,7,8-tetrahydrofolate + formate + ATP = (6R)-10-formyltetrahydrofolate + ADP + phosphate. It functions in the pathway one-carbon metabolism; tetrahydrofolate interconversion. This is Formate--tetrahydrofolate ligase from Syntrophus aciditrophicus (strain SB).